Reading from the N-terminus, the 132-residue chain is Heat shock protein 15 homolog (132 aa).

An S4 RNA-binding domain is found at 11 to 73 (VRLDKWLWAA…DEREVRVLQV (63 aa)). Composition is skewed to basic and acidic residues over residues 94 to 105 (LKKRAENSEARR) and 114 to 125 (PERRPDKQERRQ). Residues 94 to 132 (LKKRAENSEARRFNSQFAPSPERRPDKQERRQLIKVKQY) form a disordered region.

This sequence belongs to the HSP15 family.

Its function is as follows. May play an important role in binding of nucleic acid. More specific for RNA. This chain is Heat shock protein 15 homolog (hslR), found in Aeromonas salmonicida.